The chain runs to 646 residues: Chaperone protein DnaK (646 aa).

At T197 the chain carries Phosphothreonine; by autocatalysis. Residues 599-646 (QQGAQAGADPNAGSSQGAQAGTDYGTSGPKTGTADDVDYEVVNDDNDK) are disordered. Residues 610–628 (AGSSQGAQAGTDYGTSGPK) show a composition bias toward polar residues. The span at 633–646 (DDVDYEVVNDDNDK) shows a compositional bias: acidic residues.

The protein belongs to the heat shock protein 70 family.

Functionally, acts as a chaperone. In Treponema denticola (strain ATCC 35405 / DSM 14222 / CIP 103919 / JCM 8153 / KCTC 15104), this protein is Chaperone protein DnaK.